The sequence spans 332 residues: Cell growth regulator with RING finger domain protein 1 (332 aa).

The RING-type zinc finger occupies 274 to 309 (CVVCQNGGVNWVLLPCRHACLCDSCVCYFKQCPMCR).

Highly expressed in testis, lower levels of expression is seen in skeletal muscle, liver, lung and brain.

The protein localises to the nucleus. It localises to the endoplasmic reticulum. Its function is as follows. Able to inhibit growth in several cell lines. This Rattus norvegicus (Rat) protein is Cell growth regulator with RING finger domain protein 1 (Cgrrf1).